A 607-amino-acid polypeptide reads, in one-letter code: Elongation factor 4 (607 aa).

The region spanning 6–188 (DRIRNFSIIA…AIVARIPAPK (183 aa)) is the tr-type G domain. Residues 18–23 (DHGKST) and 135–138 (NKID) each bind GTP.

This sequence belongs to the TRAFAC class translation factor GTPase superfamily. Classic translation factor GTPase family. LepA subfamily.

It localises to the cell inner membrane. It carries out the reaction GTP + H2O = GDP + phosphate + H(+). Its function is as follows. Required for accurate and efficient protein synthesis under certain stress conditions. May act as a fidelity factor of the translation reaction, by catalyzing a one-codon backward translocation of tRNAs on improperly translocated ribosomes. Back-translocation proceeds from a post-translocation (POST) complex to a pre-translocation (PRE) complex, thus giving elongation factor G a second chance to translocate the tRNAs correctly. Binds to ribosomes in a GTP-dependent manner. This is Elongation factor 4 from Rhizorhabdus wittichii (strain DSM 6014 / CCUG 31198 / JCM 15750 / NBRC 105917 / EY 4224 / RW1) (Sphingomonas wittichii).